A 134-amino-acid chain; its full sequence is Arginine decarboxylase proenzyme (134 aa).

S82 functions as the Schiff-base intermediate with substrate; via pyruvic acid in the catalytic mechanism. S82 is modified (pyruvic acid (Ser); by autocatalysis). The active-site Proton acceptor; for processing activity is H87. Catalysis depends on C102, which acts as the Proton donor; for catalytic activity.

It belongs to the prokaryotic AdoMetDC family. Type 1 subfamily. Heterooctamer of four alpha and four beta chains arranged as a tetramer of alpha/beta heterodimers. Pyruvate is required as a cofactor. Is synthesized initially as an inactive proenzyme. Formation of the active enzyme involves a self-maturation process in which the active site pyruvoyl group is generated from an internal serine residue via an autocatalytic post-translational modification. Two non-identical subunits are generated from the proenzyme in this reaction, and the pyruvate is formed at the N-terminus of the alpha chain, which is derived from the carboxyl end of the proenzyme. The post-translation cleavage follows an unusual pathway, termed non-hydrolytic serinolysis, in which the side chain hydroxyl group of the serine supplies its oxygen atom to form the C-terminus of the beta chain, while the remainder of the serine residue undergoes an oxidative deamination to produce ammonia and the pyruvoyl group blocking the N-terminus of the alpha chain.

It carries out the reaction L-arginine + H(+) = agmatine + CO2. It participates in amine and polyamine biosynthesis; agmatine biosynthesis; agmatine from L-arginine: step 1/1. Specifically catalyzes the decarboxylation of L-arginine to agmatine. Has no S-adenosylmethionine decarboxylase (AdoMetDC) activity. The protein is Arginine decarboxylase proenzyme of Saccharolobus islandicus (strain M.16.4 / Kamchatka #3) (Sulfolobus islandicus).